The sequence spans 93 residues: Small ribosomal subunit protein bS20 (93 aa).

Residues 1–18 (MPLHKSAEKRLRQSEKRN) show a composition bias toward basic and acidic residues. The tract at residues 1–25 (MPLHKSAEKRLRQSEKRNARNRARK) is disordered.

Belongs to the bacterial ribosomal protein bS20 family.

Binds directly to 16S ribosomal RNA. The protein is Small ribosomal subunit protein bS20 of Chlorobium chlorochromatii (strain CaD3).